We begin with the raw amino-acid sequence, 1601 residues long: Ectopic P granules protein 5 (1601 aa).

Residues 1 to 109 (MAELVRPKKP…EAPPIPARNL (109 aa)) are disordered. Basic and acidic residues predominate over residues 15–26 (RPQSDDAPRIPD).

Belongs to the EPG5 family.

It localises to the cytoplasm. Functionally, involved in autophagy. Has a role in the degradation of protein aggregates within autophagosomes. Essential for starvation-induced autotrophy and omegasome development. The protein is Ectopic P granules protein 5 (epg-5) of Caenorhabditis briggsae.